Reading from the N-terminus, the 513-residue chain is Alanine--glyoxylate aminotransferase 2, mitochondrial (513 aa).

The N-terminal 40 residues, methionine 1–threonine 40, are a transit peptide targeting the mitochondrion. Lysine 56 carries the post-translational modification N6-acetyllysine. N6-acetyllysine; alternate is present on lysine 70. Position 70 is an N6-succinyllysine; alternate (lysine 70). Position 83 is an N6-acetyllysine (lysine 83). Position 261 is an N6-acetyllysine; alternate (lysine 261). At lysine 261 the chain carries N6-succinyllysine; alternate. Lysine 303 is modified (N6-succinyllysine). Lysine 349 is subject to N6-(pyridoxal phosphate)lysine. N6-acetyllysine; alternate occurs at positions 416 and 419. N6-succinyllysine; alternate occurs at positions 416 and 419. Lysine 453 is modified (N6-acetyllysine).

It belongs to the class-III pyridoxal-phosphate-dependent aminotransferase family. Homotetramer. Pyridoxal 5'-phosphate is required as a cofactor. Expressed in the liver and kidney.

The protein localises to the mitochondrion. It carries out the reaction glyoxylate + L-alanine = glycine + pyruvate. The catalysed reaction is (R)-3-amino-2-methylpropanoate + pyruvate = 2-methyl-3-oxopropanoate + L-alanine. The enzyme catalyses 3-oxopropanoate + L-alanine = beta-alanine + pyruvate. It catalyses the reaction 2-oxobutanoate + L-alanine = (2S)-2-aminobutanoate + pyruvate. It carries out the reaction N(omega),N(omega)-dimethyl-L-arginine + pyruvate = 5-(3,3-dimethylguanidino)-2-oxopentanoate + L-alanine. The catalysed reaction is N(omega),N('omega)-dimethyl-L-arginine + pyruvate = 5-(3,3'-dimethylguanidino)-2-oxopentanoate + L-alanine. The enzyme catalyses N(omega),N(omega)-dimethyl-L-arginine + glyoxylate = 5-(3,3-dimethylguanidino)-2-oxopentanoate + glycine. It catalyses the reaction N(omega),N('omega)-dimethyl-L-arginine + glyoxylate = 5-(3,3'-dimethylguanidino)-2-oxopentanoate + glycine. It carries out the reaction N(omega)-methyl-L-arginine + pyruvate = 5-(3-methylguanidino)-2-oxopentanoate + L-alanine. The catalysed reaction is N(omega)-methyl-L-arginine + glyoxylate = 5-(3-methylguanidino)-2-oxopentanoate + glycine. The enzyme catalyses L-ornithine + pyruvate = 5-amino-2-oxopentanoate + L-alanine. It catalyses the reaction L-ornithine + glyoxylate = 5-amino-2-oxopentanoate + glycine. It carries out the reaction (2S)-2-aminobutanoate + glyoxylate = 2-oxobutanoate + glycine. The catalysed reaction is N(omega),N(omega)-dimethyl-L-arginine + oxaloacetate = 5-(3,3-dimethylguanidino)-2-oxopentanoate + L-aspartate. The enzyme catalyses oxaloacetate + L-alanine = L-aspartate + pyruvate. It catalyses the reaction N(omega),N(omega)-dimethyl-L-arginine + 2-oxobutanoate = 5-(3,3-dimethylguanidino)-2-oxopentanoate + (2S)-2-aminobutanoate. It carries out the reaction 2-oxopentanoate + N(omega),N(omega)-dimethyl-L-arginine = 5-(3,3-dimethylguanidino)-2-oxopentanoate + L-2-aminopentanoate. The catalysed reaction is 2-oxohexanoate + N(omega),N(omega)-dimethyl-L-arginine = L-2-aminohexanoate + 5-(3,3-dimethylguanidino)-2-oxopentanoate. Its activity is regulated as follows. (R)-3-amino-2-methylpropionate--pyruvate transaminase and beta-alanine-pyruvate aminotransferase are inhibited by aminooxyacetic acid. Multifunctional aminotransferase with a broad substrate specificity. Catalyzes the conversion of glyoxylate to glycine using alanine as the amino donor. Catalyzes metabolism of not L- but the D-isomer of D-beta-aminoisobutyric acid to generate 2-methyl-3-oxopropanoate and alanine. Catalyzes the transfer of the amino group from beta-alanine to pyruvate to yield L-alanine and 3-oxopropanoate. Can metabolize NG-monomethyl-L-arginine (NMMA), asymmetric NG,NG-dimethyl-L-arginine (ADMA) and symmetric NG,N'G-dimethyl-L-arginine (SDMA). ADMA is a potent inhibitor of nitric-oxide (NO) synthase, and this activity provides mechanism through which the kidney regulates blood pressure. The protein is Alanine--glyoxylate aminotransferase 2, mitochondrial (Agxt2) of Mus musculus (Mouse).